The primary structure comprises 134 residues: Small ribosomal subunit protein uS8 (134 aa).

Belongs to the universal ribosomal protein uS8 family. As to quaternary structure, part of the 30S ribosomal subunit. Contacts proteins S5 and S12.

Functionally, one of the primary rRNA binding proteins, it binds directly to 16S rRNA central domain where it helps coordinate assembly of the platform of the 30S subunit. This chain is Small ribosomal subunit protein uS8, found in Nitratiruptor sp. (strain SB155-2).